Reading from the N-terminus, the 1068-residue chain is Tricorn protease homolog (1068 aa).

A six-bladed beta propeller region spans residues 61-326; the sequence is MKAYYMYPDI…DSLTKLDINL (266 aa). Residues 338 to 686 are seven-bladed beta propeller; sequence VNVMEYMNEA…RKGGVIDLSR (349 aa). Positions 692–762 are C-1; sequence EPEKEWRQML…RTSHSYETAY (71 aa). His-756 functions as the Charge relay system in the catalytic mechanism. A PDZ-like region spans residues 771 to 864; that stretch reads SVGGLGAEFE…RVTVKVLKDE (94 aa). The interval 865-1068 is C-2; sequence RFLIYRYWVE…TAIELALKQL (204 aa). Gly-927 is a binding site for substrate. Ser-974 acts as the Nucleophile in catalysis. Glu-1032 serves as the catalytic Charge relay system.

Belongs to the peptidase S41B family.

It localises to the cytoplasm. Degrades oligopeptides in a sequential manner. In Saccharolobus solfataricus (strain ATCC 35092 / DSM 1617 / JCM 11322 / P2) (Sulfolobus solfataricus), this protein is Tricorn protease homolog (tri).